A 229-amino-acid chain; its full sequence is uncharacterized protein (229 aa).

The next 7 membrane-spanning stretches (helical) occupy residues 21–41 (IYSL…LMLY), 56–76 (MIYY…SGAA), 83–103 (ALPI…FIIV), 109–129 (TVFQ…IIGV), 141–161 (AMFA…FIGS), 162–182 (GMMS…LIAS), and 202–222 (WAVA…ISLL).

This sequence belongs to the BI1 family.

Its subcellular location is the cell membrane. This is an uncharacterized protein from Streptococcus pyogenes serotype M6 (strain ATCC BAA-946 / MGAS10394).